The chain runs to 81 residues: Photosystem I iron-sulfur center (81 aa).

2 consecutive 4Fe-4S ferredoxin-type domains span residues alanine 2–tryptophan 31 and isoleucine 39–tyrosine 68. [4Fe-4S] cluster is bound by residues cysteine 11, cysteine 14, cysteine 17, cysteine 21, cysteine 48, cysteine 51, cysteine 54, and cysteine 58.

In terms of assembly, the eukaryotic PSI reaction center is composed of at least 11 subunits. [4Fe-4S] cluster is required as a cofactor.

It localises to the plastid. Its subcellular location is the chloroplast thylakoid membrane. It catalyses the reaction reduced [plastocyanin] + hnu + oxidized [2Fe-2S]-[ferredoxin] = oxidized [plastocyanin] + reduced [2Fe-2S]-[ferredoxin]. Apoprotein for the two 4Fe-4S centers FA and FB of photosystem I (PSI); essential for photochemical activity. FB is the terminal electron acceptor of PSI, donating electrons to ferredoxin. The C-terminus interacts with PsaA/B/D and helps assemble the protein into the PSI complex. Required for binding of PsaD and PsaE to PSI. PSI is a plastocyanin-ferredoxin oxidoreductase, converting photonic excitation into a charge separation, which transfers an electron from the donor P700 chlorophyll pair to the spectroscopically characterized acceptors A0, A1, FX, FA and FB in turn. The sequence is that of Photosystem I iron-sulfur center from Adiantum capillus-veneris (Maidenhair fern).